Consider the following 623-residue polypeptide: Putative ABC transporter ATP-binding protein MG014 homolog (623 aa).

The ABC transmembrane type-1 domain occupies 16-325 (LILAPLFTFA…YIVLGLILTS (310 aa)). 6 consecutive transmembrane segments (helical) span residues 27–47 (IIID…VFSI), 86–106 (VILL…CASI), 157–177 (FLRL…FAIA), 180–200 (SDMS…IGIL), 266–286 (NIPF…LLVF), and 307–327 (IFAF…TSLT). An ABC transporter domain is found at 365–611 (LEFKNVAFGL…CDIYVKMKQA (247 aa)). 400-407 (GPTGSGKS) serves as a coordination point for ATP.

The protein belongs to the ABC transporter superfamily.

It localises to the cell membrane. The polypeptide is Putative ABC transporter ATP-binding protein MG014 homolog (Mycoplasma pneumoniae (strain ATCC 29342 / M129 / Subtype 1) (Mycoplasmoides pneumoniae)).